A 306-amino-acid polypeptide reads, in one-letter code: MAVARLAAVAAWVPCRSWGCAAVPFGPHRGLSALLARIPQRAPRWLPACRQKTSLSFLNRPDLPNLAYKKLKGKSPGIIFIPGYLSYMNGTKALAIEEFCKSLGHACIRFDYSGVGSSDGNSEESTLGKWRKDVLSIIDDLADGPQILVGSSLGGWLMLHAAIARPEKVVALLGVATAADTLVTKFNQLPVELKKEVEMKGVWSMPSKYSEEGVYNIQYSFIKEAEHHCLLHSPIPVNCPIRLLHGMKDDIVPWHTSMQVADRVLSTDVDVILRKHSDHRMKEKADIQLLVYTIDDLIDKLSTIVN.

A mitochondrion-targeting transit peptide spans 1–52 (MAVARLAAVAAWVPCRSWGCAAVPFGPHRGLSALLARIPQRAPRWLPACRQK). Residues 78 to 177 (IIFIPGYLSY…KVVALLGVAT (100 aa)) form the AB hydrolase-1 domain. Residues Ser152, Asp249, and His279 each act as charge relay system in the active site.

Belongs to the AB hydrolase superfamily.

It is found in the mitochondrion. It carries out the reaction S-hexadecanoyl-L-cysteinyl-[protein] + H2O = L-cysteinyl-[protein] + hexadecanoate + H(+). The enzyme catalyses mycophenolic acid O-acyl-beta-D-glucuronide + H2O = mycophenolate + D-glucuronate + H(+). Inhibited by palmostatin-B. Acts as an acyl-protein thioesterase that hydrolyzes fatty acids from acylated residues in proteins. Regulates the mitochondrial S-depalmitoylation of the nucleophilic active site residue of peroxiredoxin-5/PRDX5, a key antioxidant protein, therefore modulating mitochondrial antioxidant ability. Also catalyzes the deglucuronidation of mycophenolic acid acyl-glucuronide, an active metabolite of the immunosuppressant drug mycophenolate. The sequence is that of Palmitoyl-protein thioesterase ABHD10, mitochondrial (ABHD10) from Pongo abelii (Sumatran orangutan).